A 390-amino-acid chain; its full sequence is Peroxisomal sarcosine oxidase (390 aa).

9-39 (DAIVIGAGIQGCFTAYHLAKHSKSVLLLEQF) is an FAD binding site. Residues Lys126 and Lys287 each carry the N6-acetyllysine modification. Cys319 is modified (S-8alpha-FAD cysteine). The Microbody targeting signal signature appears at 388–390 (AHL).

It belongs to the MSOX/MTOX family. Requires FAD as cofactor. In terms of tissue distribution, kidney and liver.

The protein localises to the peroxisome. The enzyme catalyses sarcosine + O2 + H2O = formaldehyde + glycine + H2O2. The catalysed reaction is L-pipecolate + O2 = L-1-piperideine-6-carboxylate + H2O2 + H(+). Its function is as follows. Metabolizes sarcosine, L-pipecolic acid and L-proline. This is Peroxisomal sarcosine oxidase (Pipox) from Mus musculus (Mouse).